Consider the following 235-residue polypeptide: tRNA (guanine-N(1)-)-methyltransferase (235 aa).

S-adenosyl-L-methionine is bound by residues Gly112 and 131-136 (LGDFVL).

Belongs to the RNA methyltransferase TrmD family. In terms of assembly, homodimer.

It is found in the cytoplasm. The catalysed reaction is guanosine(37) in tRNA + S-adenosyl-L-methionine = N(1)-methylguanosine(37) in tRNA + S-adenosyl-L-homocysteine + H(+). Its function is as follows. Specifically methylates guanosine-37 in various tRNAs. This is tRNA (guanine-N(1)-)-methyltransferase from Synechococcus elongatus (strain ATCC 33912 / PCC 7942 / FACHB-805) (Anacystis nidulans R2).